The sequence spans 405 residues: Type II secretion system protein F (405 aa).

At 1–169 (MPLYRYKALD…SRALKGKVIN (169 aa)) the chain is on the cytoplasmic side. Positions 98, 151, and 155 each coordinate Ca(2+). A helical transmembrane segment spans residues 170-190 (ALIYPAILLAVVGCALLFLLG). Residues 191–218 (YVVPQFAQMYESLDVALPWFTQAVLSVG) lie on the Periplasmic side of the membrane. A helical transmembrane segment spans residues 219 to 239 (LLVRDWWLVLVVIPGVLGLWL). The Cytoplasmic segment spans residues 240–370 (DRKRRNAAFR…LETAQAIDRA (131 aa)). The helical transmembrane segment at 371–391 (LAALVPLITLVLASVVGLVII) threads the bilayer. Residues 392-405 (SVLVPLYDLTNAIG) lie on the Periplasmic side of the membrane.

The protein belongs to the GSP F family. As to quaternary structure, type II secretion system is composed of four main components: the outer membrane complex, the inner membrane complex, the cytoplasmic secretion ATPase and the periplasm-spanning pseudopilus. Homodimer. Interacts with XpsE and XpsL components.

The protein resides in the cell inner membrane. Functionally, component of the type II secretion system inner membrane complex required for the energy-dependent secretion of extracellular factors such as proteases and toxins from the periplasm. In Xanthomonas campestris pv. campestris (strain ATCC 33913 / DSM 3586 / NCPPB 528 / LMG 568 / P 25), this protein is Type II secretion system protein F (xpsF).